The primary structure comprises 464 residues: Argininosuccinate lyase (464 aa).

Belongs to the lyase 1 family. Argininosuccinate lyase subfamily.

The protein localises to the cytoplasm. It carries out the reaction 2-(N(omega)-L-arginino)succinate = fumarate + L-arginine. Its pathway is amino-acid biosynthesis; L-arginine biosynthesis; L-arginine from L-ornithine and carbamoyl phosphate: step 3/3. This is Argininosuccinate lyase from Alcanivorax borkumensis (strain ATCC 700651 / DSM 11573 / NCIMB 13689 / SK2).